The primary structure comprises 201 residues: Small ribosomal subunit protein uS4c (201 aa).

In terms of domain architecture, S4 RNA-binding spans Met-91–Asn-153.

This sequence belongs to the universal ribosomal protein uS4 family. As to quaternary structure, part of the 30S ribosomal subunit. Contacts protein S5. The interaction surface between S4 and S5 is involved in control of translational fidelity.

Its subcellular location is the plastid. The protein resides in the cyanelle. One of the primary rRNA binding proteins, it binds directly to 16S rRNA where it nucleates assembly of the body of the 30S subunit. In terms of biological role, with S5 and S12 plays an important role in translational accuracy. In Cyanophora paradoxa, this protein is Small ribosomal subunit protein uS4c (rps4).